A 362-amino-acid chain; its full sequence is Patr class I histocompatibility antigen, A-5 alpha chain (362 aa).

The first 24 residues, 1–24 (MQVTAPRTVLLLLSAALALTETWA), serve as a signal peptide directing secretion. Residues 25-114 (GSHSMKYFYT…LRGYYNQSEA (90 aa)) are alpha-1. The Extracellular portion of the chain corresponds to 25–308 (GSHSMKYFYT…EPSSQSTIPI (284 aa)). N-linked (GlcNAc...) asparagine glycosylation is present at Asn-110. The tract at residues 115-206 (GSHIIQRMYG…ENGKETLQRA (92 aa)) is alpha-2. 2 disulfides stabilise this stretch: Cys-125–Cys-188 and Cys-227–Cys-283. Residues 207 to 298 (DPPKTHVTHH…GLPKPLTLRW (92 aa)) are alpha-3. The 87-residue stretch at 209–295 (PKTHVTHHPI…QHEGLPKPLT (87 aa)) folds into the Ig-like C1-type domain. The interval 299 to 308 (EPSSQSTIPI) is connecting peptide. Residues 309-332 (VGIVAGLAVLAVVVIGAVVAAVMC) traverse the membrane as a helical segment. Topologically, residues 333-362 (RRKSSGGKGGSYSQAASSDSAQGSDVSLTA) are cytoplasmic. The segment at 336-362 (SSGGKGGSYSQAASSDSAQGSDVSLTA) is disordered. Ser-343 carries the phosphoserine modification. The segment covering 343–362 (SYSQAASSDSAQGSDVSLTA) has biased composition (low complexity). Tyr-344 carries the post-translational modification Phosphotyrosine. A phosphoserine mark is found at Ser-345, Ser-349, Ser-350, Ser-352, Ser-356, and Ser-359.

It belongs to the MHC class I family. Heterodimer of an alpha chain and a beta chain (beta-2-microglobulin).

The protein localises to the membrane. Involved in the presentation of foreign antigens to the immune system. This chain is Patr class I histocompatibility antigen, A-5 alpha chain, found in Pan troglodytes (Chimpanzee).